Here is a 1898-residue protein sequence, read N- to C-terminus: Receptor-type tyrosine-protein phosphatase F (1898 aa).

An N-terminal signal peptide occupies residues 1-29 (MAPEPAPGRRMVPLVPALVMLGLMAGAHG). Over 30 to 1254 (DSKPVFVKVP…QQQEEPEMLW (1225 aa)) the chain is Extracellular. 3 Ig-like C2-type domains span residues 33–123 (PVFV…AKLS), 135–224 (PTID…ANLY), and 232–314 (PRFS…AQVT). Cys-54 and Cys-107 are oxidised to a cystine. 68–77 (KKGKKVSSQR) provides a ligand contact to heparin. The N-linked (GlcNAc...) asparagine glycan is linked to Asn-117. Residues Cys-156 and Cys-207 are joined by a disulfide bond. 2 N-linked (GlcNAc...) asparagine glycosylation sites follow: Asn-250 and Asn-295. The cysteines at positions 253 and 298 are disulfide-linked. 8 Fibronectin type-III domains span residues 321–411 (PPID…TGEQ), 416–510 (PPRR…TQQG), 514–604 (QPAD…TAQS), 609–706 (PPQK…TDED), 711–810 (PPRK…TTGA), 811–905 (VPGR…PEDA), 909–1001 (FPQN…TMPM), and 1005–1089 (FAKN…TAPD). Residues 693 to 713 (GPESSPVLVRTDEDVPSGPPR) are disordered. The N-linked (GlcNAc...) asparagine glycan is linked to Asn-721. N-linked (GlcNAc...) asparagine glycosylation is found at Asn-941 and Asn-957. Residues 1255-1275 (VTGPVLAVILIILIVIAILLF) traverse the membrane as a helical segment. The Cytoplasmic portion of the chain corresponds to 1276 to 1898 (KRKRTHSPSS…YLGSFDHYAT (623 aa)). Ser-1296 is subject to Phosphoserine. Tyrosine-protein phosphatase domains lie at 1343-1598 (FSQE…LLEA) and 1630-1889 (MELE…ALEY). Substrate contacts are provided by residues Asp-1507, 1539 to 1545 (CSAGVGR), and Gln-1583. Cys-1539 functions as the Phosphocysteine intermediate in the catalytic mechanism. The active-site Phosphocysteine intermediate is the Cys-1830.

Belongs to the protein-tyrosine phosphatase family. Receptor class 2A subfamily. In terms of assembly, interacts with GRIP1. Interacts with PPFIA1, PPFIA2 and PPFIA3. Interacts with PTPRF.

It is found in the membrane. It catalyses the reaction O-phospho-L-tyrosyl-[protein] + H2O = L-tyrosyl-[protein] + phosphate. Functionally, possible cell adhesion receptor. It possesses an intrinsic protein tyrosine phosphatase activity (PTPase) and dephosphorylates EPHA2 regulating its activity. The first PTPase domain has enzymatic activity, while the second one seems to affect the substrate specificity of the first one. In Rattus norvegicus (Rat), this protein is Receptor-type tyrosine-protein phosphatase F (Ptprf).